The primary structure comprises 119 residues: Fluoride-specific ion channel FluC 1 (119 aa).

4 helical membrane-spanning segments follow: residues 2–22 (TGAVAPPAVLVAAGGALGAVL), 37–57 (AGTLVVNVVGSFVLAALTFAA), 62–82 (TMLLFGTGACGAFTTFASFSV), and 99–119 (HALGNLLGAGLAVALAWLLVA). Residues G72 and T75 each contribute to the Na(+) site.

Belongs to the fluoride channel Fluc/FEX (TC 1.A.43) family.

Its subcellular location is the cell membrane. The enzyme catalyses fluoride(in) = fluoride(out). Its activity is regulated as follows. Na(+) is not transported, but it plays an essential structural role and its presence is essential for fluoride channel function. In terms of biological role, fluoride-specific ion channel. Important for reducing fluoride concentration in the cell, thus reducing its toxicity. The sequence is that of Fluoride-specific ion channel FluC 1 from Halobacterium salinarum (strain ATCC 700922 / JCM 11081 / NRC-1) (Halobacterium halobium).